Here is a 91-residue protein sequence, read N- to C-terminus: Non-specific lipid-transfer protein 1 (91 aa).

Cystine bridges form between cysteine 3–cysteine 50, cysteine 13–cysteine 27, cysteine 28–cysteine 73, and cysteine 48–cysteine 87.

This sequence belongs to the plant LTP family.

In terms of biological role, plant non-specific lipid-transfer proteins transfer phospholipids as well as galactolipids across membranes. May play a role in wax or cutin deposition in the cell walls of expanding epidermal cells and certain secretory tissues. The sequence is that of Non-specific lipid-transfer protein 1 from Prunus armeniaca (Apricot).